Here is a 33-residue protein sequence, read N- to C-terminus: Photosystem II reaction center protein Psb30 (33 aa).

A helical membrane pass occupies residues 5 to 25 (VILQLGSILLVVAAGPLVIVL).

This sequence belongs to the Psb30/Ycf12 family. PSII is composed of 1 copy each of membrane proteins PsbA, PsbB, PsbC, PsbD, PsbE, PsbF, PsbH, PsbI, PsbJ, PsbK, PsbL, PsbM, PsbT, PsbX, PsbY, PsbZ, Psb30/Ycf12, peripheral proteins of the oxygen-evolving complex and a large number of cofactors. It forms dimeric complexes.

It localises to the plastid. It is found in the chloroplast thylakoid membrane. A core subunit of photosystem II (PSII), probably helps stabilize the reaction center. The sequence is that of Photosystem II reaction center protein Psb30 from Oltmannsiellopsis viridis (Marine flagellate).